The primary structure comprises 349 residues: tRNA pseudouridine synthase D (349 aa).

Phe-27 provides a ligand contact to substrate. Asp-80 (nucleophile) is an active-site residue. Asn-129 serves as a coordination point for substrate. Positions 155-303 constitute a TRUD domain; the sequence is GVPNYFGAQR…VEAARRAMLL (149 aa). Phe-329 is a substrate binding site.

The protein belongs to the pseudouridine synthase TruD family.

The catalysed reaction is uridine(13) in tRNA = pseudouridine(13) in tRNA. Responsible for synthesis of pseudouridine from uracil-13 in transfer RNAs. This chain is tRNA pseudouridine synthase D, found in Citrobacter koseri (strain ATCC BAA-895 / CDC 4225-83 / SGSC4696).